Here is a 287-residue protein sequence, read N- to C-terminus: Nucleotide-binding protein MXAN_6564 (287 aa).

G13–S20 provides a ligand contact to ATP. D62–E65 contacts GTP.

The protein belongs to the RapZ-like family.

Displays ATPase and GTPase activities. The protein is Nucleotide-binding protein MXAN_6564 of Myxococcus xanthus (strain DK1622).